The primary structure comprises 64 residues: MPKNKSHSGASKRFKVTGSGKVLRERAGKRHLLEHKSSRLTRRLTGNAEMAPGDAKKIKKLLGK.

Belongs to the bacterial ribosomal protein bL35 family.

The polypeptide is Large ribosomal subunit protein bL35 (Streptomyces avermitilis (strain ATCC 31267 / DSM 46492 / JCM 5070 / NBRC 14893 / NCIMB 12804 / NRRL 8165 / MA-4680)).